An 865-amino-acid chain; its full sequence is DNA mismatch repair protein MutS (865 aa).

605-612 (GPNMAGKS) provides a ligand contact to ATP. Residues 814 to 833 (PEPLEAYKPKGNKQPLSDEE) form a disordered region.

This sequence belongs to the DNA mismatch repair MutS family.

In terms of biological role, this protein is involved in the repair of mismatches in DNA. It is possible that it carries out the mismatch recognition step. This protein has a weak ATPase activity. The protein is DNA mismatch repair protein MutS of Halalkalibacterium halodurans (strain ATCC BAA-125 / DSM 18197 / FERM 7344 / JCM 9153 / C-125) (Bacillus halodurans).